A 201-amino-acid polypeptide reads, in one-letter code: Protein tirC (201 aa).

In terms of domain architecture, TIR spans 52 to 186; the sequence is ERIKVFIVHG…YVWINYTEDL (135 aa).

In Dictyostelium discoideum (Social amoeba), this protein is Protein tirC (tirC).